Reading from the N-terminus, the 311-residue chain is JNK1/MAPK8-associated membrane protein (311 aa).

Topologically, residues 1 to 57 (MAVDIQPACLGLYCGKTLLFKNGSSEIYGECGVCPRGQRTNAQKYCQPCTESPELYD) are lumenal. A glycan (N-linked (GlcNAc...) asparagine) is linked at asparagine 22. The chain crosses the membrane as a helical span at residues 58–78 (WLYLGFMAMLPLVLHWFFIEW). At 79 to 87 (YSGKKSSSA) the chain is on the cytoplasmic side. The helical transmembrane segment at 88 to 108 (LFQHITALFECTMAAIITLLV) threads the bilayer. The Lumenal portion of the chain corresponds to 109–149 (SDPVGVLYIRSCRVLMLSDWYTMLYNPSPDYVTTVHCTHEA). A helical transmembrane segment spans residues 150–170 (VYPLYTIVFVYYAFCLVLMML). Topologically, residues 171–188 (LRPLLVKKIACGLGKSDR) are cytoplasmic. Residues 189–209 (FKSIYAALYFFPILTVLQAVG) traverse the membrane as a helical segment. A topological domain (lumenal) is located at residue glycine 210. A helical transmembrane segment spans residues 211 to 231 (GLLYYAFPYIILVLSLVTLAV). Residues 232-250 (YMSASEIENCYDLLVRKKR) are Cytoplasmic-facing. Residues 251–271 (LIVLFSHWLLHAYGIVSISRV) form a helical membrane-spanning segment. The Lumenal portion of the chain corresponds to 272–277 (DRLEHD). A helical membrane pass occupies residues 278–298 (LPLLALVPTPALFYLFTAKFT). Topologically, residues 299–311 (EPSRILSEGANGH) are cytoplasmic.

As to quaternary structure, interacts with RNF5 and MAPK8, but not with MAPK9. Binding to MAPK8 occurs before and after exposure to stress, such as UV irradiation. After exposure to stress, interacts with phosphorylated MAPK8. Competes with DUSP10 for MAPK8 binding. Associates with multiple components of the proteasome and with ERAD regulatory proteins, including AMFR/GP78, CANX, PSMC1, PSMC2, PSMC3/TBP1, PSMC5, PSMC6, PSMD8, SEC61-ALPHA and UFD1. In terms of processing, ubiquitinated by RNF5 via 'Lys-63'-linked ubiquitin linkage in a UBE2N-dependent manner. Ubiquitination decreases association with components of the proteasome and ERAD. As to expression, expressed in numerous tissues, including brain, spleen, thymus, liver, kidney and testis.

It is found in the endoplasmic reticulum membrane. In terms of biological role, regulates the duration of MAPK8 activity in response to various stress stimuli. Facilitates degradation of misfolded endoplasmic reticulum (ER) proteins through the recruitment of components of the proteasome and endoplasmic reticulum-associated degradation (ERAD) system. The sequence is that of JNK1/MAPK8-associated membrane protein (Jkamp) from Mus musculus (Mouse).